Consider the following 338-residue polypeptide: Glyceraldehyde-3-phosphate dehydrogenase 1 (338 aa).

Residues 13–14 (TI) and G111 contribute to the NAD(+) site. 140–142 (SCN) provides a ligand contact to D-glyceraldehyde 3-phosphate. Residue C141 is the Nucleophile of the active site. R169 provides a ligand contact to NAD(+). 195-196 (HG) is a binding site for D-glyceraldehyde 3-phosphate. Q300 contacts NAD(+).

This sequence belongs to the glyceraldehyde-3-phosphate dehydrogenase family. Homotetramer.

It localises to the cytoplasm. The catalysed reaction is D-glyceraldehyde 3-phosphate + phosphate + NADP(+) = (2R)-3-phospho-glyceroyl phosphate + NADPH + H(+). The enzyme catalyses D-glyceraldehyde 3-phosphate + phosphate + NAD(+) = (2R)-3-phospho-glyceroyl phosphate + NADH + H(+). Its pathway is carbohydrate degradation; glycolysis; pyruvate from D-glyceraldehyde 3-phosphate: step 1/5. The polypeptide is Glyceraldehyde-3-phosphate dehydrogenase 1 (Methanosarcina barkeri (strain Fusaro / DSM 804)).